The chain runs to 25 residues: Hemocyanin subunit 3 (25 aa).

This sequence belongs to the tyrosinase family. Hemocyanin subfamily. As to expression, hemolymph.

It localises to the secreted. Its subcellular location is the extracellular space. Its function is as follows. Hemocyanins are copper-containing oxygen carriers occurring freely dissolved in the hemolymph of many mollusks and arthropods. This chain is Hemocyanin subunit 3, found in Maja squinado (Mediterranean spider crab).